The following is a 39-amino-acid chain: Cytochrome b559 subunit beta (39 aa).

A helical transmembrane segment spans residues 14-30 (WLAIHGLAVPTVFSLGS). His-18 is a binding site for heme.

The protein belongs to the PsbE/PsbF family. In terms of assembly, heterodimer of an alpha subunit and a beta subunit. PSII is composed of 1 copy each of membrane proteins PsbA, PsbB, PsbC, PsbD, PsbE, PsbF, PsbH, PsbI, PsbJ, PsbK, PsbL, PsbM, PsbT, PsbX, PsbY, PsbZ, Psb30/Ycf12, at least 3 peripheral proteins of the oxygen-evolving complex and a large number of cofactors. It forms dimeric complexes. The cofactor is heme b.

The protein resides in the plastid. The protein localises to the chloroplast thylakoid membrane. Its function is as follows. This b-type cytochrome is tightly associated with the reaction center of photosystem II (PSII). PSII is a light-driven water:plastoquinone oxidoreductase that uses light energy to abstract electrons from H(2)O, generating O(2) and a proton gradient subsequently used for ATP formation. It consists of a core antenna complex that captures photons, and an electron transfer chain that converts photonic excitation into a charge separation. This chain is Cytochrome b559 subunit beta, found in Huperzia lucidula (Shining clubmoss).